A 292-amino-acid chain; its full sequence is Lipoyl synthase (292 aa).

The [4Fe-4S] cluster site is built by Cys34, Cys39, Cys45, Cys60, Cys64, Cys67, and Ser273. A Radical SAM core domain is found at Trp46–Leu262.

This sequence belongs to the radical SAM superfamily. Lipoyl synthase family. [4Fe-4S] cluster serves as cofactor.

The protein resides in the cytoplasm. The enzyme catalyses [[Fe-S] cluster scaffold protein carrying a second [4Fe-4S](2+) cluster] + N(6)-octanoyl-L-lysyl-[protein] + 2 oxidized [2Fe-2S]-[ferredoxin] + 2 S-adenosyl-L-methionine + 4 H(+) = [[Fe-S] cluster scaffold protein] + N(6)-[(R)-dihydrolipoyl]-L-lysyl-[protein] + 4 Fe(3+) + 2 hydrogen sulfide + 2 5'-deoxyadenosine + 2 L-methionine + 2 reduced [2Fe-2S]-[ferredoxin]. It participates in protein modification; protein lipoylation via endogenous pathway; protein N(6)-(lipoyl)lysine from octanoyl-[acyl-carrier-protein]: step 2/2. Functionally, catalyzes the radical-mediated insertion of two sulfur atoms into the C-6 and C-8 positions of the octanoyl moiety bound to the lipoyl domains of lipoate-dependent enzymes, thereby converting the octanoylated domains into lipoylated derivatives. The protein is Lipoyl synthase of Ehrlichia ruminantium (strain Welgevonden).